The primary structure comprises 714 residues: Protein ESC8 (714 aa).

Disordered stretches follow at residues 598–674 and 694–714; these read APTG…ELHN and RQLQ…RKGL. A compositionally biased stretch (polar residues) spans 610–624; it reads TSSQRRTTVHYSSDV. The segment covering 628–650 has biased composition (acidic residues); it reads VSEESENEVDIDVSDDYDSEYLS. The segment covering 654 to 674 has biased composition (basic and acidic residues); sequence TLTRKGEDRTDKSFGKRELHN. Over residues 704–714 the composition is skewed to basic residues; the sequence is RSLRRNARKGL.

In terms of assembly, interacts with GAL11 and SIR2.

Its subcellular location is the cytoplasm. The protein localises to the nucleus. Functionally, involved in HMR and telomere silencing via the recruitment or stabilizing of the SIR (silent information regulators) complex. In Saccharomyces cerevisiae (strain ATCC 204508 / S288c) (Baker's yeast), this protein is Protein ESC8 (ESC8).